The following is a 167-amino-acid chain: Endoribonuclease YbeY (167 aa).

The Zn(2+) site is built by His131, His135, and His141.

This sequence belongs to the endoribonuclease YbeY family. Requires Zn(2+) as cofactor.

It localises to the cytoplasm. In terms of biological role, single strand-specific metallo-endoribonuclease involved in late-stage 70S ribosome quality control and in maturation of the 3' terminus of the 16S rRNA. The protein is Endoribonuclease YbeY of Rickettsia felis (strain ATCC VR-1525 / URRWXCal2) (Rickettsia azadi).